Here is a 330-residue protein sequence, read N- to C-terminus: Ribosomal RNA small subunit methyltransferase C (330 aa).

It belongs to the methyltransferase superfamily. RsmC family. As to quaternary structure, monomer.

The protein resides in the cytoplasm. It catalyses the reaction guanosine(1207) in 16S rRNA + S-adenosyl-L-methionine = N(2)-methylguanosine(1207) in 16S rRNA + S-adenosyl-L-homocysteine + H(+). Its function is as follows. Specifically methylates the guanine in position 1207 of 16S rRNA in the 30S particle. This chain is Ribosomal RNA small subunit methyltransferase C, found in Haemophilus influenzae (strain ATCC 51907 / DSM 11121 / KW20 / Rd).